The primary structure comprises 544 residues: Chaperonin GroEL (544 aa).

ATP contacts are provided by residues Thr30–Pro33, Lys51, Asp87–Thr91, Gly415, and Asp495.

The protein belongs to the chaperonin (HSP60) family. Forms a cylinder of 14 subunits composed of two heptameric rings stacked back-to-back. Interacts with the co-chaperonin GroES.

The protein localises to the cytoplasm. The enzyme catalyses ATP + H2O + a folded polypeptide = ADP + phosphate + an unfolded polypeptide.. Functionally, together with its co-chaperonin GroES, plays an essential role in assisting protein folding. The GroEL-GroES system forms a nano-cage that allows encapsulation of the non-native substrate proteins and provides a physical environment optimized to promote and accelerate protein folding. The sequence is that of Chaperonin GroEL from Neisseria gonorrhoeae (strain ATCC 700825 / FA 1090).